The chain runs to 183 residues: Nodulation protein L (183 aa).

The protein belongs to the transferase hexapeptide repeat family.

In terms of biological role, acetyltransferase implicated in the O-acetylation of Nod factors. The polypeptide is Nodulation protein L (nodL) (Rhizobium meliloti (strain 1021) (Ensifer meliloti)).